The following is a 188-amino-acid chain: Ribosome-recycling factor (188 aa).

The protein belongs to the RRF family.

Its subcellular location is the cytoplasm. In terms of biological role, responsible for the release of ribosomes from messenger RNA at the termination of protein biosynthesis. May increase the efficiency of translation by recycling ribosomes from one round of translation to another. The sequence is that of Ribosome-recycling factor from Gluconobacter oxydans (strain 621H) (Gluconobacter suboxydans).